Reading from the N-terminus, the 243-residue chain is 3-deoxy-manno-octulosonate cytidylyltransferase (243 aa).

It belongs to the KdsB family.

It localises to the cytoplasm. The catalysed reaction is 3-deoxy-alpha-D-manno-oct-2-ulosonate + CTP = CMP-3-deoxy-beta-D-manno-octulosonate + diphosphate. Its pathway is nucleotide-sugar biosynthesis; CMP-3-deoxy-D-manno-octulosonate biosynthesis; CMP-3-deoxy-D-manno-octulosonate from 3-deoxy-D-manno-octulosonate and CTP: step 1/1. It participates in bacterial outer membrane biogenesis; lipopolysaccharide biosynthesis. Activates KDO (a required 8-carbon sugar) for incorporation into bacterial lipopolysaccharide in Gram-negative bacteria. In Bartonella quintana (strain Toulouse) (Rochalimaea quintana), this protein is 3-deoxy-manno-octulosonate cytidylyltransferase.